Consider the following 432-residue polypeptide: Trigger factor (432 aa).

One can recognise a PPIase FKBP-type domain in the interval 161-246 (EDRVTIDFTG…LKKVEERELP (86 aa)).

The protein belongs to the FKBP-type PPIase family. Tig subfamily. In terms of assembly, homodimer and monomer. In vivo most of the ribosomes are in complex with monomeric TF. Uncomplexed TF, however, is in a monomer-dimer equilibrium with approximately two thirds of TF existing in a dimeric state.

The protein resides in the cytoplasm. The enzyme catalyses [protein]-peptidylproline (omega=180) = [protein]-peptidylproline (omega=0). In terms of biological role, involved in protein export. Acts as a chaperone by maintaining the newly synthesized protein in an open conformation. Functions as a peptidyl-prolyl cis-trans isomerase. In Escherichia coli O127:H6 (strain E2348/69 / EPEC), this protein is Trigger factor.